The chain runs to 296 residues: MNMKKLATLVSAVALSATVSANAMAKDTIALVISTLNNPFFVSLKDGAQKEADKLGYNLVVLDSQNNPAKELANVQDLTVRGTKILLINPTDSDAVGNAVKMANQAKIPVITLDRQATKGDVVSHIASDNVLGGKIAGDYIAKKAGEGAKVIELQGIAGTSAARERGEGFQQAVAAHKFNVLASQPADFDRTKGLNVMQNLLTAHPDVQAVFAQNDEMALGALRALQTAGKADVMVVGFDGTPDGEKAVKDGKLAATIAQLPDQIGAKGVEVADKVLKGEKVQAKYPVDLKLVIKQ.

The first 25 residues, 1-25 (MNMKKLATLVSAVALSATVSANAMA), serve as a signal peptide directing secretion.

This sequence belongs to the bacterial solute-binding protein 2 family. The complex is composed of an ATP-binding protein (RbsA), two transmembrane proteins (RbsC) and a solute-binding protein (RbsB).

Its subcellular location is the periplasm. In terms of biological role, part of the ABC transporter complex RbsABC involved in ribose import. Binds ribose. The chain is Ribose import binding protein RbsB (rbsB) from Salmonella typhi.